We begin with the raw amino-acid sequence, 202 residues long: Outer-membrane lipoprotein carrier protein (202 aa).

The first 18 residues, 1 to 18, serve as a signal peptide directing secretion; that stretch reads MNKLFLILLLIFSHEVFS.

It belongs to the LolA family. In terms of assembly, monomer.

It is found in the periplasm. In terms of biological role, participates in the translocation of lipoproteins from the inner membrane to the outer membrane. Only forms a complex with a lipoprotein if the residue after the N-terminal Cys is not an aspartate (The Asp acts as a targeting signal to indicate that the lipoprotein should stay in the inner membrane). The sequence is that of Outer-membrane lipoprotein carrier protein from Legionella pneumophila (strain Paris).